Here is a 152-residue protein sequence, read N- to C-terminus: UPF0178 protein YPTS_2857 (152 aa).

This sequence belongs to the UPF0178 family.

The polypeptide is UPF0178 protein YPTS_2857 (Yersinia pseudotuberculosis serotype IB (strain PB1/+)).